The following is a 213-amino-acid chain: MSQLTIALTKGRILEETLPLLSAAGIEPLEDIQKSRKLLFETSSQNVRLLILRGVDVPTYVEFGAADVGVSGKDTLIEHNSKSYYEPLDLHIAKCRMMTAGIKGVPQKSGRIRVATKYVGLARQYYAEQGRQVDIIKLYGAMELAPIMNLCDEIVDIVDTGNTLRANGLEPRETICEISSRLIVNKASMKMKHREIEALIDAVSAAVNERIAA.

It belongs to the ATP phosphoribosyltransferase family. Short subfamily. As to quaternary structure, heteromultimer composed of HisG and HisZ subunits.

The protein localises to the cytoplasm. It catalyses the reaction 1-(5-phospho-beta-D-ribosyl)-ATP + diphosphate = 5-phospho-alpha-D-ribose 1-diphosphate + ATP. The protein operates within amino-acid biosynthesis; L-histidine biosynthesis; L-histidine from 5-phospho-alpha-D-ribose 1-diphosphate: step 1/9. Functionally, catalyzes the condensation of ATP and 5-phosphoribose 1-diphosphate to form N'-(5'-phosphoribosyl)-ATP (PR-ATP). Has a crucial role in the pathway because the rate of histidine biosynthesis seems to be controlled primarily by regulation of HisG enzymatic activity. The chain is ATP phosphoribosyltransferase from Teredinibacter turnerae (strain ATCC 39867 / T7901).